A 311-amino-acid polypeptide reads, in one-letter code: Solute carrier family 25 member 48 (311 aa).

Solcar repeat units follow at residues 3–86 (NFQL…TQRF), 100–205 (PHVL…LSDW), and 214–301 (PSPC…SLQA). The next 6 helical transmembrane spans lie at 9–29 (FVAGWIGGAASVIVGHPLDTV), 61–81 (GMSFPLASIAVYNSVVFGVFS), 107–127 (LLASMVAGVVSVGLGAPVDLI), 193–213 (CLYFIPYVFLSDWITPEACAG), 217–237 (CAVWLAGGMAGAISWGTATPM), and 277–295 (ITVNAVRGFPMSAAMFLGY).

Belongs to the mitochondrial carrier (TC 2.A.29) family.

The protein localises to the mitochondrion inner membrane. This Bos taurus (Bovine) protein is Solute carrier family 25 member 48 (SLC25A48).